A 100-amino-acid polypeptide reads, in one-letter code: Esterase PE11 (100 aa).

The 91-residue stretch at 4 to 94 (VTTRPDSIGE…TSYWLTELAN (91 aa)) folds into the PE domain.

This sequence belongs to the mycobacterial PE family.

It is found in the secreted. The protein localises to the cell wall. It catalyses the reaction an acetyl ester + H2O = an aliphatic alcohol + acetate + H(+). It carries out the reaction a butanoate ester + H2O = an aliphatic alcohol + butanoate + H(+). The catalysed reaction is an octanoate ester + H2O = an aliphatic alcohol + octanoate + H(+). Functionally, involved in cell wall lipids remodeling and in virulence. Restricts the biofilm growth and is essential for the optimal intracellular survival of M.tuberculosis. Shows esterase activity with a preference for short-chain esters, particularly pNP-acetate (C2) and pNP-butyrate (C4). Has weaker activity with pNP-octanoate (C8), pNP-laurate (C12) and pNP-myristate (C14). Shows weak long-chain triacylglycerol (TAG) hydrolase activity in vitro. Not necessary for PPE17 stability or for its localization on the mycobacterial surface. The sequence is that of Esterase PE11 from Mycobacterium tuberculosis (strain ATCC 25618 / H37Rv).